The sequence spans 460 residues: MTDAREKGFWTGPLEMADPELHALICGEVERQKKTINLIASENYAHQSAMEACGSVLTNKYSEGRVGERYYGGTHWVDRIELLCQKRALELFGLDPDVWGVNVQPYSGSPANFAIYTAVVPPGGRIMGLDLPSGGHLTHGYKTKTRKISASSVYFDSRPYTVGSNGLIDYEGLEKTFTDFLPHILICGYSAYSRDIDYKRLQSIAGRNGAFLFADISHISPLVASGLMNSPFEHCDIVMTTTQKGLRGPRGALIFYRRAVTKNGETVDLDARINFAVFPMLQGGPHNHTIAGIASALLHAGTPEFAEYTRRVVENSRELCSRLQSLGLDILTGGTDNHMLLVDLRSTGVDGAAVEHMCDALGISLNRNAIVGNSSPLSPSGIRVGTYAVTARGFGPEEMREVGDIIGGVVKLCREMTGGRKMSKADLHRVTSDARVMGSEQVLVLRRRVCALAEAYPIYE.

K244 bears the N6-(pyridoxal phosphate)lysine mark.

Belongs to the SHMT family. Homotetramer. Pyridoxal 5'-phosphate serves as cofactor.

The protein resides in the cytoplasm. The catalysed reaction is (6R)-5,10-methylene-5,6,7,8-tetrahydrofolate + glycine + H2O = (6S)-5,6,7,8-tetrahydrofolate + L-serine. It functions in the pathway one-carbon metabolism; tetrahydrofolate interconversion. Its function is as follows. Interconversion of serine and glycine. This chain is Serine hydroxymethyltransferase, cytosolic (SHMT-1), found in Encephalitozoon cuniculi (strain GB-M1) (Microsporidian parasite).